A 290-amino-acid polypeptide reads, in one-letter code: 4-hydroxy-tetrahydrodipicolinate synthase (290 aa).

T48 is a binding site for pyruvate. The active-site Proton donor/acceptor is the Y137. Residue K165 is the Schiff-base intermediate with substrate of the active site. I206 is a binding site for pyruvate.

It belongs to the DapA family. As to quaternary structure, homotetramer; dimer of dimers.

The protein localises to the cytoplasm. The enzyme catalyses L-aspartate 4-semialdehyde + pyruvate = (2S,4S)-4-hydroxy-2,3,4,5-tetrahydrodipicolinate + H2O + H(+). Its pathway is amino-acid biosynthesis; L-lysine biosynthesis via DAP pathway; (S)-tetrahydrodipicolinate from L-aspartate: step 3/4. Its function is as follows. Catalyzes the condensation of (S)-aspartate-beta-semialdehyde [(S)-ASA] and pyruvate to 4-hydroxy-tetrahydrodipicolinate (HTPA). In Enterococcus faecalis (strain ATCC 700802 / V583), this protein is 4-hydroxy-tetrahydrodipicolinate synthase.